The following is a 984-amino-acid chain: Ephrin type-B receptor 1 (984 aa).

The 182-residue stretch at 1-182 (ETLMDTRTAT…FFKKCPSVVQ (182 aa)) folds into the Eph LBD domain. Residues 1-541 (ETLMDTRTAT…KSELREQLPL (541 aa)) lie on the Extracellular side of the membrane. 2 Fibronectin type-III domains span residues 303-413 (VPSG…TNQA) and 414-528 (APST…TLTD). N-linked (GlcNAc...) asparagine glycans are attached at residues asparagine 315, asparagine 407, and asparagine 480. The chain crosses the membrane as a helical span at residues 542 to 562 (IAGSAAAGVVFIVSLVAISIV). Residues 563–984 (CSRKRAYSKE…QMSQSPTSMA (422 aa)) are Cytoplasmic-facing. The region spanning 619 to 882 (VKIEEVIGAG…EIVNTLDKMI (264 aa)) is the Protein kinase domain. ATP is bound by residues 625–633 (IGAGEFGEV) and lysine 651. Residue aspartate 744 is the Proton acceptor of the active site. Residues 911-975 (TAFTSVEDWL…LNSIQSMRVQ (65 aa)) enclose the SAM domain. The PDZ-binding signature appears at 982-984 (SMA).

It belongs to the protein kinase superfamily. Tyr protein kinase family. Ephrin receptor subfamily. As to quaternary structure, heterotetramer upon binding of the ligand. The heterotetramer is composed of an ephrin dimer and a receptor dimer. Oligomerization is probably required to induce biological responses. Phosphorylated. Autophosphorylation is stimulated by ligands. As to expression, expressed at high levels in the 10-day embryo, and in adult brain, lung, heart and skeletal muscle. Low levels of expression detected in all other adult tissues tested.

It localises to the cell membrane. The protein localises to the early endosome membrane. Its subcellular location is the cell projection. The protein resides in the dendrite. It carries out the reaction L-tyrosyl-[protein] + ATP = O-phospho-L-tyrosyl-[protein] + ADP + H(+). Functionally, receptor tyrosine kinase which binds promiscuously transmembrane ephrin-B family ligands residing on adjacent cells, leading to contact-dependent bidirectional signaling into neighboring cells. The signaling pathway downstream of the receptor is referred to as forward signaling while the signaling pathway downstream of the ephrin ligand is referred to as reverse signaling. May play a role in axon guidance during nervous system development. May also play an important redundant role with other ephrin-B receptors in development and maturation of dendritic spines and synapse formation. More generally, may play a role in targeted cell migration and adhesion. Upon activation by ephrin-B ligands activates the MAPK/ERK and the JNK signaling cascades to regulate cell migration and adhesion respectively. The protein is Ephrin type-B receptor 1 (EPHB1) of Gallus gallus (Chicken).